We begin with the raw amino-acid sequence, 259 residues long: 3-hydroxypropionyl-coenzyme A dehydratase (259 aa).

E113 acts as the Nucleophile in catalysis. Catalysis depends on E133, which acts as the Proton acceptor.

It belongs to the enoyl-CoA hydratase/isomerase family. In terms of assembly, monomer.

The catalysed reaction is 3-hydroxypropanoyl-CoA = acryloyl-CoA + H2O. Its function is as follows. Plays a role in autotrophic carbon fixation via the 3-hydroxypropionate/4-hydroxybutyrate cycle. Catalyzes the reversible dehydration of 3-hydroxypropionyl-CoA to form acryloyl-CoA, and the reversible dehydration of (S)-3-hydroxybutyryl-CoA to form crotonyl-CoA. Inactive towards (R)-3-hydroxybutyryl-CoA. The chain is 3-hydroxypropionyl-coenzyme A dehydratase from Metallosphaera sedula (strain ATCC 51363 / DSM 5348 / JCM 9185 / NBRC 15509 / TH2).